A 2226-amino-acid chain; its full sequence is DNA polymerase epsilon catalytic subunit A (2226 aa).

Residues 1240-1265 are disordered; it reads RVSKVTSRKRRNGKANNVSDSEEEER. The Zn(2+) site is built by C2112, C2115, C2134, and C2137. A CysA-type zinc finger spans residues 2112–2137; sequence CDYCNYIRDIDFCRDEQKNIWNCSNC. [4Fe-4S] cluster-binding residues include C2168, C2171, C2183, and C2185. The short motif at 2168–2185 is the CysB motif element; that stretch reads CSKCHQIKSDNMSEYCKC.

Belongs to the DNA polymerase type-B family. In terms of assembly, heterotetramer. Consists of 4 subunits: POL2, DPB2, DPB3 and DPB4. It depends on [4Fe-4S] cluster as a cofactor.

The protein resides in the nucleus. The enzyme catalyses DNA(n) + a 2'-deoxyribonucleoside 5'-triphosphate = DNA(n+1) + diphosphate. Functionally, DNA polymerase II participates in chromosomal DNA replication. The sequence is that of DNA polymerase epsilon catalytic subunit A (POL2) from Debaryomyces hansenii (strain ATCC 36239 / CBS 767 / BCRC 21394 / JCM 1990 / NBRC 0083 / IGC 2968) (Yeast).